The following is a 326-amino-acid chain: Endochitinase (326 aa).

The signal sequence occupies residues 1–25 (MVYCTASLPLLLLLLVGLLAGEAFA). A Chitin-binding type-1 domain is found at 26–66 (EQCGRQAGGALCPGGLCCSQFGWCGSTSDYCGPTCQSQCGG). 7 disulfides stabilise this stretch: Cys-28–Cys-43, Cys-37–Cys-49, Cys-42–Cys-56, Cys-60–Cys-64, Cys-96–Cys-158, Cys-170–Cys-178, and Cys-277–Cys-309. Glu-140 serves as the catalytic Proton donor.

This sequence belongs to the glycosyl hydrolase 19 family. Chitinase class I subfamily. Expressed in the pulp of the fruit (at protein level). Expressed in mesocarp (at protein level).

It catalyses the reaction Random endo-hydrolysis of N-acetyl-beta-D-glucosaminide (1-&gt;4)-beta-linkages in chitin and chitodextrins.. Functionally, defense against chitin-containing fungal pathogens. Has in vitro antifungal activity against F.oxysporum inhibiting its growth and the branching of its hyphae. Has endochitinase activity, but no exochitinase or lysozyme activities. The sequence is that of Endochitinase from Persea americana (Avocado).